Consider the following 204-residue polypeptide: Probable nicotinate-nucleotide adenylyltransferase (204 aa).

It belongs to the NadD family.

It catalyses the reaction nicotinate beta-D-ribonucleotide + ATP + H(+) = deamido-NAD(+) + diphosphate. Its pathway is cofactor biosynthesis; NAD(+) biosynthesis; deamido-NAD(+) from nicotinate D-ribonucleotide: step 1/1. In terms of biological role, catalyzes the reversible adenylation of nicotinate mononucleotide (NaMN) to nicotinic acid adenine dinucleotide (NaAD). The sequence is that of Probable nicotinate-nucleotide adenylyltransferase from Methylacidiphilum infernorum (isolate V4) (Methylokorus infernorum (strain V4)).